Here is a 193-residue protein sequence, read N- to C-terminus: Potassium-transporting ATPase KdpC subunit (193 aa).

Residues 7–27 form a helical membrane-spanning segment; it reads PALVLFALLSALTGLAYPLAV.

The protein belongs to the KdpC family. As to quaternary structure, the system is composed of three essential subunits: KdpA, KdpB and KdpC.

Its subcellular location is the cell inner membrane. Its function is as follows. Part of the high-affinity ATP-driven potassium transport (or Kdp) system, which catalyzes the hydrolysis of ATP coupled with the electrogenic transport of potassium into the cytoplasm. This subunit acts as a catalytic chaperone that increases the ATP-binding affinity of the ATP-hydrolyzing subunit KdpB by the formation of a transient KdpB/KdpC/ATP ternary complex. This chain is Potassium-transporting ATPase KdpC subunit, found in Variovorax paradoxus (strain S110).